We begin with the raw amino-acid sequence, 157 residues long: Small ribosomal subunit protein uS7 (157 aa).

The protein belongs to the universal ribosomal protein uS7 family. Part of the 30S ribosomal subunit. Contacts proteins S9 and S11.

Functionally, one of the primary rRNA binding proteins, it binds directly to 16S rRNA where it nucleates assembly of the head domain of the 30S subunit. Is located at the subunit interface close to the decoding center, probably blocks exit of the E-site tRNA. In Borreliella burgdorferi (strain ATCC 35210 / DSM 4680 / CIP 102532 / B31) (Borrelia burgdorferi), this protein is Small ribosomal subunit protein uS7.